The sequence spans 43 residues: Photosystem I reaction center subunit IX (43 aa).

A helical membrane pass occupies residues 7 to 27; it reads YLSVAPVLSTLWFGSLAGLLI.

The protein belongs to the PsaJ family.

It is found in the plastid. The protein localises to the chloroplast thylakoid membrane. Its function is as follows. May help in the organization of the PsaE and PsaF subunits. The polypeptide is Photosystem I reaction center subunit IX (Aethionema cordifolium (Lebanon stonecress)).